The primary structure comprises 449 residues: Trigger factor (449 aa).

One can recognise a PPIase FKBP-type domain in the interval 160–231; it reads TDQVTIEELG…VQSVQTKQLQ (72 aa). The interval 411-449 is disordered; that stretch reads GQQVAGRQEAGAEQTAQAAEQESGQPQAEGEQAAEQRGE. Positions 415 to 443 are enriched in low complexity; it reads AGRQEAGAEQTAQAAEQESGQPQAEGEQA.

The protein belongs to the FKBP-type PPIase family. Tig subfamily.

It is found in the cytoplasm. The catalysed reaction is [protein]-peptidylproline (omega=180) = [protein]-peptidylproline (omega=0). Its function is as follows. Involved in protein export. Acts as a chaperone by maintaining the newly synthesized protein in an open conformation. Functions as a peptidyl-prolyl cis-trans isomerase. The sequence is that of Trigger factor from Deinococcus geothermalis (strain DSM 11300 / CIP 105573 / AG-3a).